Reading from the N-terminus, the 114-residue chain is U10-agatoxin-Ao1a (114 aa).

Residues 1–15 (MCVATCLCTFAYVLA) form the signal peptide. A propeptide spanning residues 16–32 (KSDEGENLISKVEETQR) is cleaved from the precursor. Disulfide bonds link C34–C53, C41–C59, C50–C86, C52–C76, and C61–C74. Positions 95 to 114 (GSQNPSLCKDPNPRRRRHGK) are disordered.

The protein belongs to the neurotoxin 04 (omega-agtx) family. 03 (type II/III omega-agtx) subfamily. In terms of tissue distribution, expressed by the venom gland.

The protein localises to the secreted. In terms of biological role, inhibits voltage-gated calcium channels (Cav). The chain is U10-agatoxin-Ao1a from Agelena orientalis (Funnel-web spider).